The following is a 132-amino-acid chain: UPF0299 membrane protein YohJ (132 aa).

4 helical membrane-spanning segments follow: residues 7–27 (IIWQ…AGIF), 31–51 (LLPI…VLLA), 63–83 (GCYV…VGVM), and 93–113 (FGPV…VVSW).

The protein belongs to the UPF0299 family.

Its subcellular location is the cell inner membrane. This is UPF0299 membrane protein YohJ from Salmonella agona (strain SL483).